Here is a 763-residue protein sequence, read N- to C-terminus: Amine oxidase [copper-containing] 3 (763 aa).

The Cytoplasmic portion of the chain corresponds to 1 to 6 (MNQKTT). A helical; Signal-anchor for type II membrane protein membrane pass occupies residues 7–27 (LVLLALAVITIFALVCVLIAG). The Extracellular portion of the chain corresponds to 28–763 (RGGDGGEASQ…AFSHGGFFTN (736 aa)). N-linked (GlcNAc...) asparagine glycosylation occurs at N137. Cysteines 198 and 199 form a disulfide. 2 N-linked (GlcNAc...) asparagine glycosylation sites follow: N232 and N294. The active-site Proton acceptor is the D386. C404 and C430 are oxidised to a cystine. Y471 (schiff-base intermediate with substrate; via topaquinone) is an active-site residue. Y471 carries the 2',4',5'-topaquinone modification. Cu(2+)-binding residues include H520 and H522. Ca(2+) is bound by residues D529, L530, D531, and E572. The N-linked (GlcNAc...) asparagine glycan is linked to N618. Residues E641, F663, and N665 each contribute to the Ca(2+) site. A glycan (N-linked (GlcNAc...) asparagine) is linked at N666. 3 residues coordinate Ca(2+): E667, D673, and L674. H684 contributes to the Cu(2+) binding site. An intrachain disulfide couples C734 to C741.

This sequence belongs to the copper/topaquinone oxidase family. As to quaternary structure, homodimer; disulfide-linked. Probably forms heterodimers with AOC2. Cu(2+) is required as a cofactor. The cofactor is Ca(2+). It depends on L-topaquinone as a cofactor. Topaquinone (TPQ) is generated by copper-dependent autoxidation of a specific tyrosyl residue. Post-translationally, N- and O-glycosylated.

The protein localises to the cell membrane. The catalysed reaction is methylamine + O2 + H2O = formaldehyde + H2O2 + NH4(+). It catalyses the reaction benzylamine + O2 + H2O = benzaldehyde + H2O2 + NH4(+). The enzyme catalyses 2-phenylethylamine + O2 + H2O = 2-phenylacetaldehyde + H2O2 + NH4(+). Functionally, catalyzes the oxidative deamination of primary amines to the corresponding aldehydes with the concomitant production of hydrogen peroxide and ammonia. Has a preference for the primary monoamines methylamine and benzylamine. Could also act on 2-phenylethylamine but much less efficiently. At endothelial cells surface can also function as a cell adhesion protein that participates in lymphocyte extravasation and recirculation by mediating the binding of lymphocytes to peripheral lymph node vascular endothelial cells in an L-selectin-independent fashion. The chain is Amine oxidase [copper-containing] 3 from Bos taurus (Bovine).